We begin with the raw amino-acid sequence, 1465 residues long: DNA polymerase III PolC-type (1465 aa).

One can recognise an Exonuclease domain in the interval 427–583 (YVVFDVETTG…YDAEATGRLL (157 aa)).

Belongs to the DNA polymerase type-C family. PolC subfamily.

The protein resides in the cytoplasm. The catalysed reaction is DNA(n) + a 2'-deoxyribonucleoside 5'-triphosphate = DNA(n+1) + diphosphate. Required for replicative DNA synthesis. This DNA polymerase also exhibits 3' to 5' exonuclease activity. This is DNA polymerase III PolC-type from Streptococcus pyogenes serotype M5 (strain Manfredo).